The sequence spans 135 residues: Phosphoribosyl-AMP cyclohydrolase (135 aa).

Asp-78 is a Mg(2+) binding site. Cys-79 serves as a coordination point for Zn(2+). The Mg(2+) site is built by Asp-80 and Asp-82. Residues Cys-96 and Cys-103 each contribute to the Zn(2+) site.

The protein belongs to the PRA-CH family. As to quaternary structure, homodimer. Requires Mg(2+) as cofactor. The cofactor is Zn(2+).

The protein resides in the cytoplasm. The catalysed reaction is 1-(5-phospho-beta-D-ribosyl)-5'-AMP + H2O = 1-(5-phospho-beta-D-ribosyl)-5-[(5-phospho-beta-D-ribosylamino)methylideneamino]imidazole-4-carboxamide. It functions in the pathway amino-acid biosynthesis; L-histidine biosynthesis; L-histidine from 5-phospho-alpha-D-ribose 1-diphosphate: step 3/9. In terms of biological role, catalyzes the hydrolysis of the adenine ring of phosphoribosyl-AMP. The polypeptide is Phosphoribosyl-AMP cyclohydrolase (Cupriavidus metallidurans (strain ATCC 43123 / DSM 2839 / NBRC 102507 / CH34) (Ralstonia metallidurans)).